We begin with the raw amino-acid sequence, 263 residues long: Formamidopyrimidine-DNA glycosylase (263 aa).

The active-site Schiff-base intermediate with DNA is the P2. E3 serves as the catalytic Proton donor. K59 serves as the catalytic Proton donor; for beta-elimination activity. Positions 93 and 111 each coordinate DNA. An FPG-type zinc finger spans residues 229–263 (KVYGKNGSLCVRCNNVLIRERHAGRSTHYCPHCQK). R253 serves as the catalytic Proton donor; for delta-elimination activity.

This sequence belongs to the FPG family. As to quaternary structure, monomer. The cofactor is Zn(2+).

The catalysed reaction is Hydrolysis of DNA containing ring-opened 7-methylguanine residues, releasing 2,6-diamino-4-hydroxy-5-(N-methyl)formamidopyrimidine.. The enzyme catalyses 2'-deoxyribonucleotide-(2'-deoxyribose 5'-phosphate)-2'-deoxyribonucleotide-DNA = a 3'-end 2'-deoxyribonucleotide-(2,3-dehydro-2,3-deoxyribose 5'-phosphate)-DNA + a 5'-end 5'-phospho-2'-deoxyribonucleoside-DNA + H(+). In terms of biological role, involved in base excision repair of DNA damaged by oxidation or by mutagenic agents. Acts as a DNA glycosylase that recognizes and removes damaged bases. Has a preference for oxidized purines, such as 7,8-dihydro-8-oxoguanine (8-oxoG). Has AP (apurinic/apyrimidinic) lyase activity and introduces nicks in the DNA strand. Cleaves the DNA backbone by beta-delta elimination to generate a single-strand break at the site of the removed base with both 3'- and 5'-phosphates. This chain is Formamidopyrimidine-DNA glycosylase, found in Carboxydothermus hydrogenoformans (strain ATCC BAA-161 / DSM 6008 / Z-2901).